The following is an 81-amino-acid chain: Large ribosomal subunit protein bL27m (81 aa).

Residues 1-11 (MATKKSGGSSR) show a composition bias toward polar residues. Residues 1–20 (MATKKSGGSSRNGRDSKGRR) are disordered.

The protein belongs to the bacterial ribosomal protein bL27 family.

It localises to the mitochondrion. The sequence is that of Large ribosomal subunit protein bL27m (RPL27) from Reclinomonas americana.